The chain runs to 333 residues: Cysteine protease (333 aa).

Positions 1 to 18 are cleaved as a signal peptide; sequence MKFLLVAALCALVAIGSC. The propeptide at 19–108 is activation peptide; the sequence is KPTREEIKTF…MEAAKEPLIN (90 aa). N-linked (GlcNAc...) asparagine glycosylation is present at N93. 2 disulfide bridges follow: C134–C182 and C168–C214. C137 is a catalytic residue. Catalysis depends on residues H281 and N301.

This sequence belongs to the peptidase C1 family. Homodimer.

Cysteine protease. This chain is Cysteine protease, found in Blomia tropicalis (Mite).